The sequence spans 346 residues: Phosphate acyltransferase (346 aa).

It belongs to the PlsX family. Homodimer. Probably interacts with PlsY.

Its subcellular location is the cytoplasm. The catalysed reaction is a fatty acyl-[ACP] + phosphate = an acyl phosphate + holo-[ACP]. It participates in lipid metabolism; phospholipid metabolism. Its function is as follows. Catalyzes the reversible formation of acyl-phosphate (acyl-PO(4)) from acyl-[acyl-carrier-protein] (acyl-ACP). This enzyme utilizes acyl-ACP as fatty acyl donor, but not acyl-CoA. The sequence is that of Phosphate acyltransferase from Pelobacter propionicus (strain DSM 2379 / NBRC 103807 / OttBd1).